Consider the following 421-residue polypeptide: CinA-like protein (421 aa).

This sequence belongs to the CinA family.

The polypeptide is CinA-like protein (Mycobacterium sp. (strain JLS)).